Here is a 611-residue protein sequence, read N- to C-terminus: Dihydroxy-acid dehydratase (611 aa).

Residue Asp81 coordinates Mg(2+). Cys122 serves as a coordination point for [2Fe-2S] cluster. Asp123 and Lys124 together coordinate Mg(2+). Lys124 bears the N6-carboxylysine mark. Position 195 (Cys195) interacts with [2Fe-2S] cluster. Residue Glu491 participates in Mg(2+) binding. The active-site Proton acceptor is Ser517.

It belongs to the IlvD/Edd family. In terms of assembly, homodimer. The cofactor is [2Fe-2S] cluster. Mg(2+) serves as cofactor.

The enzyme catalyses (2R)-2,3-dihydroxy-3-methylbutanoate = 3-methyl-2-oxobutanoate + H2O. It catalyses the reaction (2R,3R)-2,3-dihydroxy-3-methylpentanoate = (S)-3-methyl-2-oxopentanoate + H2O. Its pathway is amino-acid biosynthesis; L-isoleucine biosynthesis; L-isoleucine from 2-oxobutanoate: step 3/4. It functions in the pathway amino-acid biosynthesis; L-valine biosynthesis; L-valine from pyruvate: step 3/4. In terms of biological role, functions in the biosynthesis of branched-chain amino acids. Catalyzes the dehydration of (2R,3R)-2,3-dihydroxy-3-methylpentanoate (2,3-dihydroxy-3-methylvalerate) into 2-oxo-3-methylpentanoate (2-oxo-3-methylvalerate) and of (2R)-2,3-dihydroxy-3-methylbutanoate (2,3-dihydroxyisovalerate) into 2-oxo-3-methylbutanoate (2-oxoisovalerate), the penultimate precursor to L-isoleucine and L-valine, respectively. In Glaesserella parasuis serovar 5 (strain SH0165) (Haemophilus parasuis), this protein is Dihydroxy-acid dehydratase.